Consider the following 506-residue polypeptide: Galactose/methyl galactoside import ATP-binding protein MglA (506 aa).

2 consecutive ABC transporter domains span residues 14-249 (LEMS…VGRS) and 264-506 (VILE…SLHL). 46–53 (GENGAGKS) contacts ATP.

It belongs to the ABC transporter superfamily. Galactose/methyl galactoside importer (TC 3.A.1.2.3) family. As to quaternary structure, the complex is composed of one ATP-binding protein (MglA), two transmembrane proteins (MglC) and a solute-binding protein (MglB).

The protein localises to the cell inner membrane. The enzyme catalyses D-galactose(out) + ATP + H2O = D-galactose(in) + ADP + phosphate + H(+). It catalyses the reaction methyl beta-D-galactoside(out) + ATP + H2O = methyl beta-D-galactoside(in) + ADP + phosphate + H(+). Its function is as follows. Part of the ABC transporter complex MglABC involved in galactose/methyl galactoside import. Responsible for energy coupling to the transport system. The polypeptide is Galactose/methyl galactoside import ATP-binding protein MglA (Escherichia coli O157:H7).